We begin with the raw amino-acid sequence, 398 residues long: Trans-2-enoyl-CoA reductase [NADH] (398 aa).

NAD(+) contacts are provided by residues 47–52 (GASSGF), 74–75 (YE), 111–112 (DA), and 139–140 (LA). Tyr-225 provides a ligand contact to substrate. Tyr-235 functions as the Proton donor in the catalytic mechanism. Residues Lys-244 and 274–276 (LVT) each bind NAD(+).

This sequence belongs to the TER reductase family. Monomer.

It carries out the reaction a 2,3-saturated acyl-CoA + NAD(+) = a (2E)-enoyl-CoA + NADH + H(+). It participates in lipid metabolism; fatty acid biosynthesis. Functionally, involved in the fatty acid synthesis (FAS II). Catalyzes the reduction of the carbon-carbon double bond of crotonyl-CoA to yield butyryl-CoA. In Clostridium acetobutylicum (strain ATCC 824 / DSM 792 / JCM 1419 / IAM 19013 / LMG 5710 / NBRC 13948 / NRRL B-527 / VKM B-1787 / 2291 / W), this protein is Trans-2-enoyl-CoA reductase [NADH].